Consider the following 230-residue polypeptide: dITP/XTP pyrophosphatase (230 aa).

7–12 (STNPGK) serves as a coordination point for substrate. Mg(2+) contacts are provided by Glu-41 and Asp-70. Asp-70 acts as the Proton acceptor in catalysis. Residues Ser-71, 181 to 184 (FGYD), Lys-205, and 210 to 211 (HR) each bind substrate.

It belongs to the HAM1 NTPase family. Homodimer. Mg(2+) is required as a cofactor.

It carries out the reaction XTP + H2O = XMP + diphosphate + H(+). It catalyses the reaction dITP + H2O = dIMP + diphosphate + H(+). The enzyme catalyses ITP + H2O = IMP + diphosphate + H(+). Functionally, pyrophosphatase that catalyzes the hydrolysis of nucleoside triphosphates to their monophosphate derivatives, with a high preference for the non-canonical purine nucleotides XTP (xanthosine triphosphate), dITP (deoxyinosine triphosphate) and ITP. Seems to function as a house-cleaning enzyme that removes non-canonical purine nucleotides from the nucleotide pool, thus preventing their incorporation into DNA/RNA and avoiding chromosomal lesions. The chain is dITP/XTP pyrophosphatase from Anaeromyxobacter sp. (strain Fw109-5).